Reading from the N-terminus, the 343-residue chain is MQVKTQSCVVAGKKTVAVTEQTIDWNNNGTLVQITRGGICGSDLHYYQEGKVGNFMIKAPMVLGHEVIGKVIHSDSSELHEGQTVAINPSKPCGHCKYCIEHNENQCTDMRFFGSAMYFPHVDGGFTRYKMVETSQCVPYPAKADEKVMAFAEPLAVAIHAAHQAGELQGKRVFISGVGPIGCLIVSAVKTLGAAEIVCADVSPRSLSLGKEMGADVLVNPQNDDMDHWKAEKGYFDVSFEVSGHPSSVNTCLEVTRARGVMVQVGMGGAMAEFPMMTLIGKEISLRGSFRFTSEFNTAVSWLANGVINPLPLLSAEYPFTDLEEALRFAGDKTQAAKVQLVF.

Zn(2+)-binding residues include Cys40, His65, Cys93, Cys96, Cys99, Cys107, and Glu153.

The protein belongs to the zinc-containing alcohol dehydrogenase family. Requires Zn(2+) as cofactor.

It carries out the reaction L-idonate + NADP(+) = 5-dehydro-D-gluconate + NADPH + H(+). The catalysed reaction is L-idonate + NAD(+) = 5-dehydro-D-gluconate + NADH + H(+). Its pathway is carbohydrate acid metabolism; L-idonate degradation. In terms of biological role, catalyzes the NADH/NADPH-dependent oxidation of L-idonate to 5-ketogluconate (5KG). The chain is L-idonate 5-dehydrogenase (NAD(P)(+)) (idnD) from Escherichia coli (strain K12).